Consider the following 131-residue polypeptide: Small ribosomal subunit protein uS8c (131 aa).

The protein belongs to the universal ribosomal protein uS8 family. In terms of assembly, part of the 30S ribosomal subunit.

The protein localises to the plastid. Its subcellular location is the chloroplast. Functionally, one of the primary rRNA binding proteins, it binds directly to 16S rRNA central domain where it helps coordinate assembly of the platform of the 30S subunit. The sequence is that of Small ribosomal subunit protein uS8c (rps8) from Phalaenopsis aphrodite subsp. formosana (Moth orchid).